A 144-amino-acid polypeptide reads, in one-letter code: Large ribosomal subunit protein uL11 (144 aa).

It belongs to the universal ribosomal protein uL11 family. As to quaternary structure, part of the ribosomal stalk of the 50S ribosomal subunit. Interacts with L10 and the large rRNA to form the base of the stalk. L10 forms an elongated spine to which L12 dimers bind in a sequential fashion forming a multimeric L10(L12)X complex. Post-translationally, one or more lysine residues are methylated.

In terms of biological role, forms part of the ribosomal stalk which helps the ribosome interact with GTP-bound translation factors. The sequence is that of Large ribosomal subunit protein uL11 from Deinococcus geothermalis (strain DSM 11300 / CIP 105573 / AG-3a).